The primary structure comprises 130 residues: Calcitonin gene-related peptide 2 (130 aa).

Residues 1 to 26 (MDFWKFFPFLALSTIWVLCLASSLQA) form the signal peptide. Residues 27 to 82 (APFRSALESSLDLGTLGDQEKHLLLAALMQDYEQMKARKLEQEEQETKGSRVTAQK) constitute a propeptide that is removed on maturation. Cysteine 85 and cysteine 90 form a disulfide bridge. Position 120 is a phenylalanine amide (phenylalanine 120). A propeptide spanning residues 127-130 (DLQA) is cleaved from the precursor.

Belongs to the calcitonin family. In terms of tissue distribution, detected in nerve cells of cerebrum, hippocampus and pons/midbrain in newborns, and only in nerve cells of pons/midbrain in adult.

It is found in the secreted. In terms of biological role, CALCB/CGRP2 is a peptide hormone that induces vasodilation mediated by the CALCRL-RAMP1 receptor complex. Dilates a variety of vessels including the coronary, cerebral and systemic vasculature. Its abundance in the CNS also points toward a neurotransmitter or neuromodulator role. This is Calcitonin gene-related peptide 2 from Mus musculus (Mouse).